Reading from the N-terminus, the 250-residue chain is tRNA (guanine-N(1)-)-methyltransferase (250 aa).

S-adenosyl-L-methionine-binding positions include Gly-116 and Ile-136–Leu-141.

Belongs to the RNA methyltransferase TrmD family. Homodimer.

The protein localises to the cytoplasm. It carries out the reaction guanosine(37) in tRNA + S-adenosyl-L-methionine = N(1)-methylguanosine(37) in tRNA + S-adenosyl-L-homocysteine + H(+). Specifically methylates guanosine-37 in various tRNAs. The chain is tRNA (guanine-N(1)-)-methyltransferase from Pseudomonas putida (strain W619).